We begin with the raw amino-acid sequence, 122 residues long: Ribonuclease P protein component (122 aa).

It belongs to the RnpA family. In terms of assembly, consists of a catalytic RNA component (M1 or rnpB) and a protein subunit.

The catalysed reaction is Endonucleolytic cleavage of RNA, removing 5'-extranucleotides from tRNA precursor.. RNaseP catalyzes the removal of the 5'-leader sequence from pre-tRNA to produce the mature 5'-terminus. It can also cleave other RNA substrates such as 4.5S RNA. The protein component plays an auxiliary but essential role in vivo by binding to the 5'-leader sequence and broadening the substrate specificity of the ribozyme. This Halorhodospira halophila (strain DSM 244 / SL1) (Ectothiorhodospira halophila (strain DSM 244 / SL1)) protein is Ribonuclease P protein component.